A 3459-amino-acid chain; its full sequence is uncharacterized protein (3459 aa).

The segment covering 158–167 (NDDDWIFNED) has biased composition (acidic residues). Disordered regions lie at residues 158–230 (NDDD…NNNN) and 400–447 (YGYI…NDEK). Residues 168 to 184 (DEKKNKNNDGNDNRYDY) are compositionally biased toward basic and acidic residues. The segment covering 185–201 (NDLQNNNNNDNNKYDYN) has biased composition (low complexity). Over residues 204–221 (DDEKKNKNNDGDDNKYDY) the composition is skewed to basic and acidic residues. The span at 406 to 443 (DNDDGDDYNDDNDNDDNYNDDNYNDDNYNDDNYNDDNY) shows a compositional bias: acidic residues. Residues 771–851 (VNEKKKGENE…NEMNKDEENE (81 aa)) are a coiled coil. Residues 1059-1079 (LIYMIYLFFTYKKYDLLLMFI) traverse the membrane as a helical segment. Disordered regions lie at residues 1148-1187 (RRQE…NDYD), 1399-1467 (IPTQ…NDDD), and 1711-1733 (QKKK…NKEN). The segment covering 1404–1463 (DKNETDEGNKNETDEGDKNETDEGDKNETDEGNKNETEEIYKNETDEGNKNETEEIYKND) has biased composition (basic and acidic residues). 2 helical membrane-spanning segments follow: residues 2059–2079 (FLLF…IFFF) and 2197–2217 (IIQC…DFLF). Disordered stretches follow at residues 2582–2644 (IYKD…DNNN) and 2776–2835 (GRIW…DKGD). Residues 2592 to 2629 (DNNDDDNINDDDNINDDDNINDDDNNNDDDNNNDDNND) show a composition bias toward acidic residues. Residues 2779–2821 (WKREENGEKKKNEKNESEKNERNEKNEKNEKHEKHEKHEKNEK) show a composition bias toward basic and acidic residues. Positions 2785 to 2820 (GEKKKNEKNESEKNERNEKNEKNEKHEKHEKHEKNE) form a coiled coil. 2 consecutive transmembrane segments (helical) span residues 3229–3249 (LFII…SFIL) and 3296–3316 (LLFF…NINS).

The protein localises to the membrane. This is an uncharacterized protein from Plasmodium falciparum (isolate 3D7).